The chain runs to 471 residues: Monocarboxylate transporter 11 (471 aa).

Over residues 1–13 (MPAPQRKHRRGGF) the composition is skewed to basic residues. The interval 1-31 (MPAPQRKHRRGGFSHRCFPTPQTAMTPQPAG) is disordered. Topologically, residues 1–35 (MPAPQRKHRRGGFSHRCFPTPQTAMTPQPAGPPDG) are cytoplasmic. Residues 19 to 28 (PTPQTAMTPQ) show a composition bias toward low complexity. The next 12 membrane-spanning stretches (helical) occupy residues 36–56 (GWGW…YGLL), 78–98 (AWIS…GSAL), 106–126 (PVVM…AFAS), 131–151 (LYLG…APAL), 163–183 (VLAV…LAPA), 198–218 (LLLG…LPLV), 243–263 (AFSI…VPYV), 273–293 (GLGG…DAGA), 312–332 (LAVF…VPVV), 333–353 (GGEE…GLSA), 367–389 (LVGV…LGGL), and 407–427 (ASFL…IGLP). At 428–471 (RALPSCGPASPPATPPPETGELLPAPQAVLLSPGGPGSTLDTTC) the chain is on the cytoplasmic side.

Belongs to the major facilitator superfamily. Monocarboxylate porter (TC 2.A.1.13) family. As to quaternary structure, interacts with isoform 2 of BSG. Expressed in liver, salivary gland and thyroid.

It localises to the endoplasmic reticulum membrane. It is found in the cell membrane. It catalyses the reaction pyruvate(out) + H(+)(out) = pyruvate(in) + H(+)(in). Functionally, proton-linked monocarboxylate transporter. It catalyzes the transport of pyruvate across the plasma membrane. Probably involved in hepatic lipid metabolism: overexpression results in an increase of triacylglycerol(TAG) levels, small increases in intracellular diacylglycerols and decreases in lysophosphatidylcholine, cholesterol ester and sphingomyelin lipids. The protein is Monocarboxylate transporter 11 (SLC16A11) of Homo sapiens (Human).